We begin with the raw amino-acid sequence, 468 residues long: Argininosuccinate lyase (468 aa).

The protein belongs to the lyase 1 family. Argininosuccinate lyase subfamily.

The protein resides in the cytoplasm. It catalyses the reaction 2-(N(omega)-L-arginino)succinate = fumarate + L-arginine. It functions in the pathway amino-acid biosynthesis; L-arginine biosynthesis; L-arginine from L-ornithine and carbamoyl phosphate: step 3/3. The polypeptide is Argininosuccinate lyase (Paraburkholderia xenovorans (strain LB400)).